Here is a 1234-residue protein sequence, read N- to C-terminus: Formin-like protein 3 (1234 aa).

One can recognise a Phosphatase tensin-type domain in the interval 1–208; sequence MRLDSFPASI…QYVARRNISP (208 aa). Catalysis depends on Cys141, which acts as the Phosphocysteine intermediate. The C2 tensin-type domain occupies 214–352; sequence ERALSFDCLI…FRAEMLFCEL (139 aa). Disordered regions lie at residues 443–478 and 492–840; these read DSDE…NINH and LVNT…LKPL. Residues 498 to 507 show a composition bias toward pro residues; the sequence is VLPPTTPPPC. Residues 524 to 534 are compositionally biased toward basic and acidic residues; that stretch reads VQHESPSDRKL. Pro residues-rich tracts occupy residues 536–576, 584–656, 663–673, 688–699, 709–721, 729–739, and 762–784; these read SPSP…PPLP, QPPP…PPAP, PAPPPPPPPPR, GPPPPPPPPLPP, PSAP…PPPA, APAPPLPPPLP, and PAPP…PPPL. Residues 827-1226 form the FH2 domain; that stretch reads QQSNPPKKAS…KLEKDKEKAT (400 aa).

The protein belongs to the formin-like family. Class-II subfamily.

This is Formin-like protein 3 (FH3) from Oryza sativa subsp. japonica (Rice).